The sequence spans 231 residues: LexA repressor (231 aa).

The segment at residues 26–46 (FEEMKEALDLKSKSGIHRLIG) is a DNA-binding region (H-T-H motif). Residues serine 152 and lysine 190 each act as for autocatalytic cleavage activity in the active site.

It belongs to the peptidase S24 family. As to quaternary structure, homodimer.

It carries out the reaction Hydrolysis of Ala-|-Gly bond in repressor LexA.. Represses a number of genes involved in the response to DNA damage (SOS response), including recA and lexA. In the presence of single-stranded DNA, RecA interacts with LexA causing an autocatalytic cleavage which disrupts the DNA-binding part of LexA, leading to derepression of the SOS regulon and eventually DNA repair. This is LexA repressor from Acidiphilium cryptum (strain JF-5).